The primary structure comprises 1502 residues: E3 ubiquitin-protein ligase UPL4 (1502 aa).

Over residues 1–21 the composition is skewed to basic and acidic residues; that stretch reads MENRGQKRMEVVEELPADKRA. The interval 1–107 is disordered; sequence MENRGQKRME…DYQRQRSSGD (107 aa). The span at 22-46 shows a compositional bias: polar residues; it reads CNSQDFRPSTSGSSVQAQANDTNPG. Residues 67-90 are compositionally biased toward acidic residues; that stretch reads DEEEQEEQDKEDSDYGSCDSDEED. A compositionally biased stretch (basic and acidic residues) spans 91 to 107; sequence PRQRVLQDYQRQRSSGD. ARM repeat units follow at residues 143–183, 186–226, 228–265, and 267–306; these read EESL…YLCD, PPSV…KISR, EPVA…NICK, and LSSE…KIAD. The segment at 833–881 is disordered; sequence CQAESSSPMEIDSESSDASQLQGSQVEDQTQLPGQQNASSSETSSEKED. The segment covering 849 to 875 has biased composition (polar residues); sequence DASQLQGSQVEDQTQLPGQQNASSSET. The segment at 1022-1096 is K-box; it reads RPVPHSEFVS…IRHHPQHLSS (75 aa). An HECT domain is found at 1128-1502; it reads KMMELYGNQK…TEGQGSFHLS (375 aa). C1469 functions as the Glycyl thioester intermediate in the catalytic mechanism.

This sequence belongs to the UPL family. K-HECT subfamily.

The enzyme catalyses S-ubiquitinyl-[E2 ubiquitin-conjugating enzyme]-L-cysteine + [acceptor protein]-L-lysine = [E2 ubiquitin-conjugating enzyme]-L-cysteine + N(6)-ubiquitinyl-[acceptor protein]-L-lysine.. The protein operates within protein modification; protein ubiquitination. Its function is as follows. Probable E3 ubiquitin-protein ligase which mediates ubiquitination and subsequent proteasomal degradation of target proteins. The sequence is that of E3 ubiquitin-protein ligase UPL4 (UPL4) from Arabidopsis thaliana (Mouse-ear cress).